The sequence spans 284 residues: UTP--glucose-1-phosphate uridylyltransferase (284 aa).

It belongs to the UDPGP type 2 family.

It carries out the reaction alpha-D-glucose 1-phosphate + UTP + H(+) = UDP-alpha-D-glucose + diphosphate. This Komagataeibacter xylinus (Gluconacetobacter xylinus) protein is UTP--glucose-1-phosphate uridylyltransferase (celA).